We begin with the raw amino-acid sequence, 430 residues long: MSSVVVVGSQWGDEGKGKITDFLSQNAEVIARYQGGDNAGHTIAFDGKTYKLRLIPSGIFYSDKISVIGNGVVLNPKSLVTELKYLHDNGVSTDNLRISNRAHVILPYHIVLDGLQEAAKKDNKIGTTNKGIGPAYMDKAARVGIRVADLLEKDTFEEKLRTNLEEKNRLFEKMYGHEPLKFEDIFEEYYEYGQELKDYVTDTSVILNDALDSGKRVLFEGAQGVMLDIDQGTYPFVTSSNPVAGGVTIGSGVGPAKIDKVVGACKAYTSRVGDGPFPTELHDEIGDHIREVGHEYGTVTKRPRRIGWFDSVVMRHSKRVSGLTNLCLNCVDVLTGLDEIKICTAYELNGEKIYHYPASLKELSACKPVYETLPGWKEDITNCKTLEDLPENARNYIHRIQDLVGVKVSTFSVGPDREQTNVLDNVWAHI.

GTP contacts are provided by residues Gly-12 to Lys-18 and Gly-40 to Thr-42. The active-site Proton acceptor is Asp-13. Asp-13 and Gly-40 together coordinate Mg(2+). Residues Asp-13–Lys-16, Asn-38–His-41, Thr-128, Arg-142, Gln-223, Thr-238, and Arg-302 contribute to the IMP site. His-41 serves as the catalytic Proton donor. Thr-298–Arg-304 contacts substrate. GTP is bound by residues Arg-304, Cys-330–Asp-332, and Ser-412–Gly-414.

This sequence belongs to the adenylosuccinate synthetase family. As to quaternary structure, homodimer. The cofactor is Mg(2+).

It is found in the cytoplasm. The catalysed reaction is IMP + L-aspartate + GTP = N(6)-(1,2-dicarboxyethyl)-AMP + GDP + phosphate + 2 H(+). It participates in purine metabolism; AMP biosynthesis via de novo pathway; AMP from IMP: step 1/2. In terms of biological role, plays an important role in the de novo pathway of purine nucleotide biosynthesis. Catalyzes the first committed step in the biosynthesis of AMP from IMP. This chain is Adenylosuccinate synthetase, found in Ligilactobacillus salivarius (strain UCC118) (Lactobacillus salivarius).